We begin with the raw amino-acid sequence, 39 residues long: Cytochrome b559 subunit beta (39 aa).

A helical transmembrane segment spans residues 14-30 (WLAVHGLAVPTVFFLGS). His-18 provides a ligand contact to heme.

Belongs to the PsbE/PsbF family. Heterodimer of an alpha subunit and a beta subunit. PSII is composed of 1 copy each of membrane proteins PsbA, PsbB, PsbC, PsbD, PsbE, PsbF, PsbH, PsbI, PsbJ, PsbK, PsbL, PsbM, PsbT, PsbX, PsbY, PsbZ, Psb30/Ycf12, at least 3 peripheral proteins of the oxygen-evolving complex and a large number of cofactors. It forms dimeric complexes. The cofactor is heme b.

It localises to the plastid. It is found in the chloroplast thylakoid membrane. In terms of biological role, this b-type cytochrome is tightly associated with the reaction center of photosystem II (PSII). PSII is a light-driven water:plastoquinone oxidoreductase that uses light energy to abstract electrons from H(2)O, generating O(2) and a proton gradient subsequently used for ATP formation. It consists of a core antenna complex that captures photons, and an electron transfer chain that converts photonic excitation into a charge separation. This chain is Cytochrome b559 subunit beta, found in Nicotiana glutinosa (Tobacco).